Here is a 198-residue protein sequence, read N- to C-terminus: NAD(P)H dehydrogenase (quinone) (198 aa).

Positions 4-189 constitute a Flavodoxin-like domain; sequence ILVLYYSMYG…SIARYQGEYV (186 aa). Residues 10–15 and 78–80 each bind FMN; these read SMYGHI and TRF. Residue Tyr12 participates in NAD(+) binding. Substrate is bound at residue Trp98. FMN contacts are provided by residues 113-118 and His133; that span reads STGTGG.

This sequence belongs to the WrbA family. FMN is required as a cofactor.

It carries out the reaction a quinone + NADH + H(+) = a quinol + NAD(+). The enzyme catalyses a quinone + NADPH + H(+) = a quinol + NADP(+). This is NAD(P)H dehydrogenase (quinone) from Salmonella agona (strain SL483).